The sequence spans 301 residues: GTPase Era (301 aa).

The 169-residue stretch at 7–175 (YCGFIAIVGR…AAIVRKHLPE (169 aa)) folds into the Era-type G domain. The tract at residues 15 to 22 (GRPNVGKS) is G1. 15 to 22 (GRPNVGKS) serves as a coordination point for GTP. The tract at residues 41–45 (QTTRH) is G2. The interval 62-65 (DTPG) is G3. Residues 62–66 (DTPGL) and 124–127 (NKVD) contribute to the GTP site. The tract at residues 124–127 (NKVD) is G4. The G5 stretch occupies residues 154–156 (ISA). Residues 206–283 (LGAELPYSVT…HLELWVKVKS (78 aa)) enclose the KH type-2 domain.

This sequence belongs to the TRAFAC class TrmE-Era-EngA-EngB-Septin-like GTPase superfamily. Era GTPase family. In terms of assembly, monomer.

The protein localises to the cytoplasm. It is found in the cell inner membrane. An essential GTPase that binds both GDP and GTP, with rapid nucleotide exchange. Plays a role in 16S rRNA processing and 30S ribosomal subunit biogenesis and possibly also in cell cycle regulation and energy metabolism. The chain is GTPase Era from Escherichia coli O157:H7.